The primary structure comprises 142 residues: ATP synthase subunit b' (142 aa).

A helical transmembrane segment spans residues 7-27 (TLPLMMFQFFLLVAVLNAVFF).

It belongs to the ATPase B chain family. F-type ATPases have 2 components, F(1) - the catalytic core - and F(0) - the membrane proton channel. F(1) has five subunits: alpha(3), beta(3), gamma(1), delta(1), epsilon(1). F(0) has four main subunits: a(1), b(1), b'(1) and c(10-14). The alpha and beta chains form an alternating ring which encloses part of the gamma chain. F(1) is attached to F(0) by a central stalk formed by the gamma and epsilon chains, while a peripheral stalk is formed by the delta, b and b' chains.

It localises to the cellular thylakoid membrane. In terms of biological role, f(1)F(0) ATP synthase produces ATP from ADP in the presence of a proton or sodium gradient. F-type ATPases consist of two structural domains, F(1) containing the extramembraneous catalytic core and F(0) containing the membrane proton channel, linked together by a central stalk and a peripheral stalk. During catalysis, ATP synthesis in the catalytic domain of F(1) is coupled via a rotary mechanism of the central stalk subunits to proton translocation. Its function is as follows. Component of the F(0) channel, it forms part of the peripheral stalk, linking F(1) to F(0). The b'-subunit is a diverged and duplicated form of b found in plants and photosynthetic bacteria. This chain is ATP synthase subunit b', found in Acaryochloris marina (strain MBIC 11017).